The following is a 426-amino-acid chain: Serine hydroxymethyltransferase (426 aa).

Residues leucine 122 and glycine 126–leucine 128 contribute to the (6S)-5,6,7,8-tetrahydrofolate site. The residue at position 231 (lysine 231) is an N6-(pyridoxal phosphate)lysine.

It belongs to the SHMT family. In terms of assembly, homodimer. Pyridoxal 5'-phosphate is required as a cofactor.

The protein localises to the cytoplasm. It catalyses the reaction (6R)-5,10-methylene-5,6,7,8-tetrahydrofolate + glycine + H2O = (6S)-5,6,7,8-tetrahydrofolate + L-serine. Its pathway is one-carbon metabolism; tetrahydrofolate interconversion. It participates in amino-acid biosynthesis; glycine biosynthesis; glycine from L-serine: step 1/1. Catalyzes the reversible interconversion of serine and glycine with tetrahydrofolate (THF) serving as the one-carbon carrier. This reaction serves as the major source of one-carbon groups required for the biosynthesis of purines, thymidylate, methionine, and other important biomolecules. Also exhibits THF-independent aldolase activity toward beta-hydroxyamino acids, producing glycine and aldehydes, via a retro-aldol mechanism. In Koribacter versatilis (strain Ellin345), this protein is Serine hydroxymethyltransferase.